The chain runs to 199 residues: Recombination protein RecR (199 aa).

A C4-type zinc finger spans residues 58 to 73 (CKKCFNLTSEDECEIC). Residues 81-175 (KLICVVSETK…KVTRIAYGLP (95 aa)) enclose the Toprim domain.

It belongs to the RecR family.

May play a role in DNA repair. It seems to be involved in an RecBC-independent recombinational process of DNA repair. It may act with RecF and RecO. This is Recombination protein RecR from Prochlorococcus marinus (strain AS9601).